We begin with the raw amino-acid sequence, 75 residues long: UPF0352 protein CKO_00587 (75 aa).

It belongs to the UPF0352 family.

The chain is UPF0352 protein CKO_00587 from Citrobacter koseri (strain ATCC BAA-895 / CDC 4225-83 / SGSC4696).